We begin with the raw amino-acid sequence, 241 residues long: Methylthioribulose-1-phosphate dehydratase (241 aa).

C96 contacts substrate. Zn(2+) is bound by residues H114 and H116. The active-site Proton donor/acceptor is E138. H194 serves as a coordination point for Zn(2+).

The protein belongs to the aldolase class II family. MtnB subfamily. Zn(2+) serves as cofactor.

It localises to the cytoplasm. The catalysed reaction is 5-(methylsulfanyl)-D-ribulose 1-phosphate = 5-methylsulfanyl-2,3-dioxopentyl phosphate + H2O. It functions in the pathway amino-acid biosynthesis; L-methionine biosynthesis via salvage pathway; L-methionine from S-methyl-5-thio-alpha-D-ribose 1-phosphate: step 2/6. Its function is as follows. Catalyzes the dehydration of methylthioribulose-1-phosphate (MTRu-1-P) into 2,3-diketo-5-methylthiopentyl-1-phosphate (DK-MTP-1-P). Functions in the methionine salvage pathway. May play a role in apoptosis. In Danio rerio (Zebrafish), this protein is Methylthioribulose-1-phosphate dehydratase.